The sequence spans 877 residues: Putative leucine-rich repeat receptor-like serine/threonine-protein kinase At2g19230 (877 aa).

The first 24 residues, Met1–Ala24, serve as a signal peptide directing secretion. The Extracellular portion of the chain corresponds to Gln25–Tyr517. N-linked (GlcNAc...) asparagine glycosylation is found at Asn142, Asn233, Asn261, Asn295, Asn405, and Asn420. LRR repeat units lie at residues Pro439–Pro462 and Asp463–Glu484. The chain crosses the membrane as a helical span at residues Ile518–Phe538. Residues Trp539–Arg877 are Cytoplasmic-facing. In terms of domain architecture, Protein kinase spans Asn569 to Leu842. Residues Leu575 to Val583 and Lys596 contribute to the ATP site. Residue Tyr641 is modified to Phosphotyrosine. Catalysis depends on Asp692, which acts as the Proton acceptor. At Ser726 the chain carries Phosphoserine. Phosphothreonine is present on residues Thr727 and Thr732.

Belongs to the protein kinase superfamily. Ser/Thr protein kinase family.

The protein resides in the cell membrane. It catalyses the reaction L-seryl-[protein] + ATP = O-phospho-L-seryl-[protein] + ADP + H(+). It carries out the reaction L-threonyl-[protein] + ATP = O-phospho-L-threonyl-[protein] + ADP + H(+). The chain is Putative leucine-rich repeat receptor-like serine/threonine-protein kinase At2g19230 from Arabidopsis thaliana (Mouse-ear cress).